The sequence spans 296 residues: Protoheme IX farnesyltransferase (296 aa).

A run of 9 helical transmembrane segments spans residues 8–28 (VTKPGIIFGNLISVVGGFLLA), 35–55 (YPLFLATLVGVSLVVASGCVF), 84–104 (VSLVYATALGIAGFALLYIGA), 107–127 (LAMWLAVMGFVVYVGVYSLYM), 132–152 (VYGTLIGSLSGAAPPVIGYCA), 162–182 (LILLAIFSLWQMPHSYAIAIF), 208–228 (ITVYIVAFMIATLMLTLGGYA), 229–249 (GYKYLIVAAAVSVWWLGMALR), and 263–283 (LFVFSIVAITSLSVMMSIDFS).

The protein belongs to the UbiA prenyltransferase family. Protoheme IX farnesyltransferase subfamily.

It localises to the cell inner membrane. It catalyses the reaction heme b + (2E,6E)-farnesyl diphosphate + H2O = Fe(II)-heme o + diphosphate. It participates in porphyrin-containing compound metabolism; heme O biosynthesis; heme O from protoheme: step 1/1. In terms of biological role, converts heme B (protoheme IX) to heme O by substitution of the vinyl group on carbon 2 of heme B porphyrin ring with a hydroxyethyl farnesyl side group. The protein is Protoheme IX farnesyltransferase of Serratia proteamaculans (strain 568).